A 647-amino-acid polypeptide reads, in one-letter code: 1-deoxy-D-xylulose-5-phosphate synthase (647 aa).

Thiamine diphosphate is bound by residues His72 and 113–115 (GHA). Residue Asp144 coordinates Mg(2+). Thiamine diphosphate-binding positions include 145 to 146 (GA), Asn174, Tyr287, and Glu370. A Mg(2+)-binding site is contributed by Asn174.

Belongs to the transketolase family. DXPS subfamily. In terms of assembly, homodimer. It depends on Mg(2+) as a cofactor. Thiamine diphosphate is required as a cofactor.

The catalysed reaction is D-glyceraldehyde 3-phosphate + pyruvate + H(+) = 1-deoxy-D-xylulose 5-phosphate + CO2. The protein operates within metabolic intermediate biosynthesis; 1-deoxy-D-xylulose 5-phosphate biosynthesis; 1-deoxy-D-xylulose 5-phosphate from D-glyceraldehyde 3-phosphate and pyruvate: step 1/1. Functionally, catalyzes the acyloin condensation reaction between C atoms 2 and 3 of pyruvate and glyceraldehyde 3-phosphate to yield 1-deoxy-D-xylulose-5-phosphate (DXP). The chain is 1-deoxy-D-xylulose-5-phosphate synthase from Synechococcus sp. (strain WH7803).